The sequence spans 138 residues: Acidic phospholipase A2 BmooPLA2 (138 aa).

A signal peptide spans 1–16; that stretch reads MRTLWIVAVLLLGVEG. Cystine bridges form between cysteine 42/cysteine 131, cysteine 44/cysteine 60, cysteine 59/cysteine 111, cysteine 65/cysteine 138, cysteine 66/cysteine 104, cysteine 73/cysteine 97, and cysteine 91/cysteine 102. Ca(2+) is bound by residues tyrosine 43, glycine 45, and glycine 47. Histidine 63 is an active-site residue. Aspartate 64 serves as a coordination point for Ca(2+). Residue aspartate 105 is part of the active site.

Belongs to the phospholipase A2 family. Group II subfamily. D49 sub-subfamily. Ca(2+) serves as cofactor. Expressed by the venom gland.

The protein localises to the secreted. It carries out the reaction a 1,2-diacyl-sn-glycero-3-phosphocholine + H2O = a 1-acyl-sn-glycero-3-phosphocholine + a fatty acid + H(+). Its function is as follows. Snake venom phospholipase A2 (PLA2) that inhibits ADP- and collagen-induced platelet aggregation, has edema-inducing, anti-coagulant activity, antibacterial activity, and cytotoxic activity. In vivo, has a hypotensive effect. PLA2 catalyzes the calcium-dependent hydrolysis of the 2-acyl groups in 3-sn-phosphoglycerides. This is Acidic phospholipase A2 BmooPLA2 from Bothrops moojeni (Lance-headed viper).